Reading from the N-terminus, the 64-residue chain is Large ribosomal subunit protein bL35 (64 aa).

The protein belongs to the bacterial ribosomal protein bL35 family.

The sequence is that of Large ribosomal subunit protein bL35 from Streptomyces avermitilis (strain ATCC 31267 / DSM 46492 / JCM 5070 / NBRC 14893 / NCIMB 12804 / NRRL 8165 / MA-4680).